The primary structure comprises 541 residues: Valine N-monooxygenase 2 (541 aa).

Residues 1–18 (MAMNVSTTATTTASFAST) are Cytoplasmic-facing. Residues 19–41 (SSMNNTAKILLITLFISIVSTVI) traverse the membrane as a helical segment. Topologically, residues 42–541 (KLQKRASYKK…LAPHLYPTSP (500 aa)) are lumenal. A glycan (N-linked (GlcNAc...) asparagine) is linked at N277. C477 is a heme binding site. The N-linked (GlcNAc...) asparagine glycan is linked to N505.

This sequence belongs to the cytochrome P450 family. Heme is required as a cofactor. Expressed in the epidermis, the next two cortex cell layers, the endodermis and the pericycle of leaf petioles. Strong expression around the laticifers among the phloem cells and in parenchymatic cells between the protoxylem and the metaxylem cells. In the leaves, preferentially expressed in the mesophyll cells adjacent to the epidermis.

It is found in the microsome membrane. It catalyses the reaction L-valine + 2 reduced [NADPH--hemoprotein reductase] + 2 O2 = (E)-2-methylpropanal oxime + 2 oxidized [NADPH--hemoprotein reductase] + CO2 + 3 H2O + 2 H(+). The enzyme catalyses L-valine + reduced [NADPH--hemoprotein reductase] + O2 = N-hydroxy-L-valine + oxidized [NADPH--hemoprotein reductase] + H2O + 2 H(+). It carries out the reaction N-hydroxy-L-valine + reduced [NADPH--hemoprotein reductase] + O2 = N,N-dihydroxy-L-valine + oxidized [NADPH--hemoprotein reductase] + H2O + H(+). The catalysed reaction is L-isoleucine + 2 reduced [NADPH--hemoprotein reductase] + 2 O2 = (1E,2S)-2-methylbutanal oxime + 2 oxidized [NADPH--hemoprotein reductase] + CO2 + 3 H2O + 2 H(+). It catalyses the reaction L-isoleucine + reduced [NADPH--hemoprotein reductase] + O2 = N-hydroxy-L-isoleucine + oxidized [NADPH--hemoprotein reductase] + H2O + 2 H(+). The enzyme catalyses N-hydroxy-L-isoleucine + reduced [NADPH--hemoprotein reductase] + O2 = N,N-dihydroxy-L-isoleucine + oxidized [NADPH--hemoprotein reductase] + H2O + H(+). In terms of biological role, involved in the biosynthesis of the cyanogenic glucosides linamarin and lotaustralin. Can use L-valine or L-isoleucine as substrate. Catalyzes multi-step reactions starting with two successive N-hydroxylations using L-valine and L-isoleucine as substrates leading to the formation of N,N-dihydroxy-L-valine and N,N-dihydroxy-L-isoleucine, respectively; following spontaneous reactions lead to the production of (E)-2-methylpropanal oxime and (1E,2S)-2-methylbutanal oxime, respectively. The chain is Valine N-monooxygenase 2 from Manihot esculenta (Cassava).